We begin with the raw amino-acid sequence, 673 residues long: Cyclic nucleotide-binding domain-containing protein 2 (673 aa).

Polar residues predominate over residues 1–15 (MNRSANPEAASSTSH). The tract at residues 1–89 (MNRSANPEAA…PQPKDRPGVQ (89 aa)) is disordered. Residues 43–86 (PADKSDTTESKSESGSDSRSEEDKESPASIKEIKAETPQPKDRP) are compositionally biased toward basic and acidic residues. 206–329 (CYRSYTESLQ…ETQYRYNFFR (124 aa)) serves as a coordination point for a nucleoside 3',5'-cyclic phosphate.

In terms of tissue distribution, testis-specific. Exclusively expressed in testicular germ cells while it is not present in mature sperm (at protein level).

It localises to the cytoplasm. Its subcellular location is the cytosol. Functionally, essential for male fertility. Plays an important role in spermatogenesis and regulates sperm motility by controlling the development of the flagellar bending of sperm. The sequence is that of Cyclic nucleotide-binding domain-containing protein 2 (Cnbd2) from Mus musculus (Mouse).